The chain runs to 83 residues: uncharacterized protein (83 aa).

The chain crosses the membrane as a helical span at residues 24–44 (AMTLLIITNTLLIILSYSVLL).

It localises to the host membrane. This is an uncharacterized protein from Acidianus sp. F28 (AFV-2).